The primary structure comprises 464 residues: Chromosomal replication initiator protein DnaA (464 aa).

Positions 1–82 (MSLSLWQQCL…LLRFEVGSKP (82 aa)) are domain I, interacts with DnaA modulators. Residues 82–127 (PPQMAVLQPASQHASEAPSQAAVARPRPSRPSWDNAPVQPELSYRS) form a domain II region. Residues 91–118 (ASQHASEAPSQAAVARPRPSRPSWDNAP) are disordered. The domain III, AAA+ region stretch occupies residues 128-344 (NVNPKHNFDN…GALNRVIANA (217 aa)). Residues Gly-172, Gly-174, Lys-175, and Thr-176 each contribute to the ATP site. Residues 345–464 (NFTGRAITID…FSNLIRTLSS (120 aa)) are domain IV, binds dsDNA.

This sequence belongs to the DnaA family. Oligomerizes as a right-handed, spiral filament on DNA at oriC.

The protein localises to the cytoplasm. Its function is as follows. Plays an essential role in the initiation and regulation of chromosomal replication. ATP-DnaA binds to the origin of replication (oriC) to initiate formation of the DNA replication initiation complex once per cell cycle. Binds the DnaA box (a 9 base pair repeat at the origin) and separates the double-stranded (ds)DNA. Forms a right-handed helical filament on oriC DNA; dsDNA binds to the exterior of the filament while single-stranded (ss)DNA is stabiized in the filament's interior. The ATP-DnaA-oriC complex binds and stabilizes one strand of the AT-rich DNA unwinding element (DUE), permitting loading of DNA polymerase. After initiation quickly degrades to an ADP-DnaA complex that is not apt for DNA replication. Binds acidic phospholipids. The sequence is that of Chromosomal replication initiator protein DnaA from Sodalis glossinidius (strain morsitans).